The following is a 96-amino-acid chain: Large ribosomal subunit protein bL25 (96 aa).

The protein belongs to the bacterial ribosomal protein bL25 family. Part of the 50S ribosomal subunit; part of the 5S rRNA/L5/L18/L25 subcomplex. Contacts the 5S rRNA. Binds to the 5S rRNA independently of L5 and L18.

Functionally, this is one of the proteins that binds to the 5S RNA in the ribosome where it forms part of the central protuberance. The chain is Large ribosomal subunit protein bL25 from Buchnera aphidicola subsp. Schizaphis graminum (strain Sg).